We begin with the raw amino-acid sequence, 494 residues long: Lipopolysaccharide core galacturonosyltransferase RgtB (494 aa).

10 consecutive transmembrane segments (helical) span residues 9–29, 74–94, 104–124, 127–147, 156–176, 197–217, 251–271, 291–311, 316–336, and 345–365; these read ISWIFALLAAYFVLQVGVRLA, LTALSIVKNLLLFISYLLYGL, ALVAIATLGLLTIPQMAFEMQ, LTHTVAVFFSASIFFYGFIRS, YLIAGIGIGFGLLAKYNFAIL, WRLGLTAAVALVITLPHLFWL, LALAIISFAALTVAVFAIVFG, MMLVFLAGILLLIVFGGAAGI, LVPMLFILPLYFCLKIEAAGV, and FIPVVAVIMIGVPAALYGSVA.

This sequence belongs to the glycosyltransferase 83 family.

It localises to the cell inner membrane. It functions in the pathway bacterial outer membrane biogenesis; LPS core biosynthesis. Its function is as follows. Involved in the modification of the lipopolysaccharide (LPS) inner core. Catalyzes the transfer of a galacturonic acid (GalA) residue to the 5-position of the outer Kdo (3-deoxy-D-manno-octulosonic acid) residue of the LPS inner core, using dodecaprenyl phosphate-GalA as the donor substrate. Acts after the other GalA transferase RgtA. This is Lipopolysaccharide core galacturonosyltransferase RgtB from Rhizobium johnstonii (strain DSM 114642 / LMG 32736 / 3841) (Rhizobium leguminosarum bv. viciae).